A 316-amino-acid chain; its full sequence is Actinorhodin polyketide synthase bifunctional cyclase/dehydratase (316 aa).

It functions in the pathway antibiotic biosynthesis; actinorhodin biosynthesis. Functionally, is needed for correct cyclization of the oligoketide leading to isochromanequinone formation. This is Actinorhodin polyketide synthase bifunctional cyclase/dehydratase from Streptomyces coelicolor (strain ATCC BAA-471 / A3(2) / M145).